We begin with the raw amino-acid sequence, 309 residues long: tRNA dimethylallyltransferase (309 aa).

11 to 18 serves as a coordination point for ATP; the sequence is GPTASGKS. A substrate-binding site is contributed by 13–18; the sequence is TASGKS. Interaction with substrate tRNA regions lie at residues 36–39 and 160–164; these read DSMQ and QRLLR.

It belongs to the IPP transferase family. Monomer. Mg(2+) serves as cofactor.

It carries out the reaction adenosine(37) in tRNA + dimethylallyl diphosphate = N(6)-dimethylallyladenosine(37) in tRNA + diphosphate. Catalyzes the transfer of a dimethylallyl group onto the adenine at position 37 in tRNAs that read codons beginning with uridine, leading to the formation of N6-(dimethylallyl)adenosine (i(6)A). The sequence is that of tRNA dimethylallyltransferase from Caulobacter sp. (strain K31).